The chain runs to 497 residues: Probable cytosol aminopeptidase (497 aa).

Lysine 263 and aspartate 268 together coordinate Mn(2+). Residue lysine 275 is part of the active site. The Mn(2+) site is built by aspartate 286, aspartate 345, and glutamate 347. The active site involves arginine 349.

It belongs to the peptidase M17 family. The cofactor is Mn(2+).

The protein localises to the cytoplasm. The enzyme catalyses Release of an N-terminal amino acid, Xaa-|-Yaa-, in which Xaa is preferably Leu, but may be other amino acids including Pro although not Arg or Lys, and Yaa may be Pro. Amino acid amides and methyl esters are also readily hydrolyzed, but rates on arylamides are exceedingly low.. It catalyses the reaction Release of an N-terminal amino acid, preferentially leucine, but not glutamic or aspartic acids.. Presumably involved in the processing and regular turnover of intracellular proteins. Catalyzes the removal of unsubstituted N-terminal amino acids from various peptides. The protein is Probable cytosol aminopeptidase of Methylorubrum populi (strain ATCC BAA-705 / NCIMB 13946 / BJ001) (Methylobacterium populi).